A 481-amino-acid chain; its full sequence is NADH-quinone oxidoreductase subunit N (481 aa).

14 helical membrane passes run 11-31 (AIPE…DLFW), 38-58 (LAAV…VFEM), 69-89 (FVLD…VLMV), 107-127 (VFVL…GGSL), 128-148 (LSVY…VAFY), 162-182 (FVLG…LYGL), 203-223 (LVLV…LGAA), 237-257 (PTVV…ALII), 271-291 (WQQI…VIAI), 299-319 (MLAY…VAGT), 327-347 (FFYT…ILLV), 370-390 (YAFL…TVGF), 401-421 (VAAG…IGAF), and 457-477 (LALL…FYAM).

This sequence belongs to the complex I subunit 2 family. In terms of assembly, NDH-1 is composed of 14 different subunits. Subunits NuoA, H, J, K, L, M, N constitute the membrane sector of the complex.

The protein resides in the cell inner membrane. It catalyses the reaction a quinone + NADH + 5 H(+)(in) = a quinol + NAD(+) + 4 H(+)(out). Functionally, NDH-1 shuttles electrons from NADH, via FMN and iron-sulfur (Fe-S) centers, to quinones in the respiratory chain. The immediate electron acceptor for the enzyme in this species is believed to be ubiquinone. Couples the redox reaction to proton translocation (for every two electrons transferred, four hydrogen ions are translocated across the cytoplasmic membrane), and thus conserves the redox energy in a proton gradient. In Acidithiobacillus ferrooxidans (strain ATCC 23270 / DSM 14882 / CIP 104768 / NCIMB 8455) (Ferrobacillus ferrooxidans (strain ATCC 23270)), this protein is NADH-quinone oxidoreductase subunit N.